A 211-amino-acid chain; its full sequence is Potassium-transporting ATPase KdpC subunit (211 aa).

Residues 13-35 (VVTMVLTGLLYPLAVTGLAQLLF) form a helical membrane-spanning segment.

Belongs to the KdpC family. The system is composed of three essential subunits: KdpA, KdpB and KdpC.

It is found in the cell inner membrane. Part of the high-affinity ATP-driven potassium transport (or Kdp) system, which catalyzes the hydrolysis of ATP coupled with the electrogenic transport of potassium into the cytoplasm. This subunit acts as a catalytic chaperone that increases the ATP-binding affinity of the ATP-hydrolyzing subunit KdpB by the formation of a transient KdpB/KdpC/ATP ternary complex. This Myxococcus xanthus (strain DK1622) protein is Potassium-transporting ATPase KdpC subunit.